We begin with the raw amino-acid sequence, 154 residues long: Anti-sigma-E factor RseA (154 aa).

T39 is modified (phosphothreonine; by PknB). 3 residues coordinate Zn(2+): H66, C70, and C73. A disordered region spans residues 104-154 (SEIPRCPPEGPSKGSSGGSSQGPPDGAAAGFGDRFADGDGGNRGRQSRVRR). The span at 124-136 (QGPPDGAAAGFGD) shows a compositional bias: low complexity.

This sequence belongs to the zinc-associated anti-sigma factor (ZAS) superfamily. As to quaternary structure, interacts with cognate ECF RNA polymerase sigma factor SigE under reducing conditions; this inhibits the interaction of SigE with the RNA polymerase catalytic core. It depends on Zn(2+) as a cofactor. In terms of processing, phosphorylated by PknB on Thr-39; can be dephosphorylated (at least in vitro) by PstP. Phosphorylation is the signal for subsequent degradation by the ClpC1-ClpP2 complex. Post-translationally, degraded following vancomycin treatment (surface stress) by a ClpC1-ClpP2 complex.

The protein resides in the cytoplasm. In terms of biological role, an anti-sigma factor for extracytoplasmic function (ECF) sigma factor SigE. ECF sigma factors are held in an inactive form by an anti-sigma factor. This chain is Anti-sigma-E factor RseA (rseA), found in Mycobacterium tuberculosis (strain ATCC 25618 / H37Rv).